The following is a 197-amino-acid chain: Molybdenum cofactor guanylyltransferase (197 aa).

Residues leucine 10 to glycine 12, lysine 23, asparagine 51, aspartate 69, and aspartate 99 each bind GTP. Position 99 (aspartate 99) interacts with Mg(2+).

The protein belongs to the MobA family. Monomer. It depends on Mg(2+) as a cofactor.

The protein localises to the cytoplasm. It catalyses the reaction Mo-molybdopterin + GTP + H(+) = Mo-molybdopterin guanine dinucleotide + diphosphate. Transfers a GMP moiety from GTP to Mo-molybdopterin (Mo-MPT) cofactor (Moco or molybdenum cofactor) to form Mo-molybdopterin guanine dinucleotide (Mo-MGD) cofactor. This chain is Molybdenum cofactor guanylyltransferase, found in Shewanella sp. (strain ANA-3).